Reading from the N-terminus, the 341-residue chain is Methionine import ATP-binding protein MetN 3 (341 aa).

The 240-residue stretch at 2–241 (ILLENVKKIY…PQQDITKRFV (240 aa)) folds into the ABC transporter domain. 38–45 (GYSGAGKS) contributes to the ATP binding site.

Belongs to the ABC transporter superfamily. Methionine importer (TC 3.A.1.24) family. As to quaternary structure, the complex is composed of two ATP-binding proteins (MetN), two transmembrane proteins (MetI) and a solute-binding protein (MetQ).

The protein resides in the cell membrane. It catalyses the reaction L-methionine(out) + ATP + H2O = L-methionine(in) + ADP + phosphate + H(+). The enzyme catalyses D-methionine(out) + ATP + H2O = D-methionine(in) + ADP + phosphate + H(+). Its function is as follows. Part of the ABC transporter complex MetNIQ involved in methionine import. Responsible for energy coupling to the transport system. This chain is Methionine import ATP-binding protein MetN 3, found in Bacillus anthracis.